Consider the following 215-residue polypeptide: MSDNAQLTGLCDRFRGFYPVVIDVETAGFNAKTDALLEIAAITLKMDEQGWLMPDTTLHFHVEPFVGANLQPEALAFNGIDPNDPDRGAVSEYEALHEIFKVVRKGIKASGCNRAIMVAHNANFDHSFMMAAAERASLKRNPFHPFATFDTAALAGLALGQTVLSKACQTAGMDFDSTQAHSALYDTERTAVLFCEIVNRWKRLGGWPLPAAEEV.

Positions 20 to 194 (VVIDVETAGF…YDTERTAVLF (175 aa)) constitute an Exonuclease domain. The Mg(2+) site is built by D23, E25, H181, and D186. Residue H181 is the Proton donor/acceptor of the active site.

Belongs to the RNase T family. As to quaternary structure, homodimer. The cofactor is Mg(2+).

Trims short 3' overhangs of a variety of RNA species, leaving a one or two nucleotide 3' overhang. Responsible for the end-turnover of tRNA: specifically removes the terminal AMP residue from uncharged tRNA (tRNA-C-C-A). Also appears to be involved in tRNA biosynthesis. The protein is Ribonuclease T of Shigella dysenteriae serotype 1 (strain Sd197).